The sequence spans 464 residues: Citrate synthase, mitochondrial (464 aa).

A mitochondrion-targeting transit peptide spans 1–27 (MALLTAATRLLGAKNSSCLVLAARHAS). Residues 2 to 21 (ALLTAATRLLGAKNSSCLVL) carry the SIFI-degron motif. Lysine 57 carries the post-translational modification N6-succinyllysine. At lysine 76 the chain carries N6-acetyllysine; alternate. The residue at position 76 (lysine 76) is an N6-succinyllysine; alternate. An N6-succinyllysine mark is found at lysine 103 and lysine 193. Position 226 is a phosphoserine (serine 226). Histidine 301 is an active-site residue. N6-acetyllysine; alternate occurs at positions 321 and 327. N6-succinyllysine; alternate is present on residues lysine 321 and lysine 327. The active site involves histidine 347. Oxaloacetate is bound at residue arginine 356. Lysine 375 carries the N6-acetyllysine; alternate modification. Lysine 375 is modified (N6-succinyllysine; alternate). The residue at position 382 (lysine 382) is an N6-acetyllysine. Lysine 393 carries the N6-acetyllysine; alternate modification. An N6-succinyllysine; alternate modification is found at lysine 393. N6,N6,N6-trimethyllysine is present on lysine 395. The active site involves aspartate 402. Residues arginine 428 and arginine 448 each contribute to the oxaloacetate site. Residue lysine 450 is modified to N6-succinyllysine. Position 459 is an N6-acetyllysine; alternate (lysine 459). N6-succinyllysine; alternate is present on lysine 459.

Belongs to the citrate synthase family. As to quaternary structure, homodimer. Methylated. Trimethylation at Lys-395 by CSKMT decreases citrate synthase activity. In terms of processing, in response to mitochondrial stress, the precursor protein is ubiquitinated by the SIFI complex in the cytoplasm before mitochondrial import, leading to its degradation. Within the SIFI complex, UBR4 initiates ubiquitin chain that are further elongated or branched by KCMF1.

Its subcellular location is the mitochondrion matrix. It catalyses the reaction oxaloacetate + acetyl-CoA + H2O = citrate + CoA + H(+). It participates in carbohydrate metabolism; tricarboxylic acid cycle; isocitrate from oxaloacetate: step 1/2. Key enzyme of the Krebs tricarboxylic acid cycle which catalyzes the synthesis of citrate from acetyl coenzyme A and oxaloacetate. The sequence is that of Citrate synthase, mitochondrial (Cs) from Mus musculus (Mouse).